The primary structure comprises 149 residues: Large ribosomal subunit protein bL9 (149 aa).

It belongs to the bacterial ribosomal protein bL9 family.

Functionally, binds to the 23S rRNA. The chain is Large ribosomal subunit protein bL9 from Helicobacter pylori (strain ATCC 700392 / 26695) (Campylobacter pylori).